The sequence spans 349 residues: Sesquiterpene synthase MAC_05714 (349 aa).

Mg(2+) is bound by residues Asp91 and Asp96. Residues 91 to 96 (DDLFVD) carry the DDXXXD motif motif. Arg184 lines the substrate pocket. 3 residues coordinate Mg(2+): Asn230, Ser234, and Glu238.

This sequence belongs to the terpene synthase family. The cofactor is Mg(2+).

The catalysed reaction is (2E,6E)-farnesyl diphosphate + H2O = (+)-corvol ether B + diphosphate. It catalyses the reaction (2E,6E)-farnesyl diphosphate + H2O = (+)-corvol ether A + diphosphate. Its function is as follows. Terpene synthase that catalyzes the conversion of (2E,6E)-farnesyl diphosphate (FPP) into sesquiterpenes which are important for fungi-environment interactions. Produces a mixture consisting of 8 sesquiterpenes including corvol ethers A and B, as well as traces of epizonarene, gamma-cadinene, delta-cadinene, alpha-cadinene, alpha-cadinol, and an unidentified sesquiterpene. Produces both corvol ether A and corvol ether B in similar concentrations. This chain is Sesquiterpene synthase MAC_05714, found in Metarhizium acridum (strain CQMa 102).